The chain runs to 206 residues: Large ribosomal subunit protein uL4 (206 aa).

Positions 43-78 are disordered; it reads ARSGNRKQKDREEVKHTTKKPWRQKGTGRARAGMSS. Residues 49–58 are compositionally biased toward basic and acidic residues; that stretch reads KQKDREEVKH. The span at 59-70 shows a compositional bias: basic residues; that stretch reads TTKKPWRQKGTG.

It belongs to the universal ribosomal protein uL4 family. As to quaternary structure, part of the 50S ribosomal subunit.

Functionally, one of the primary rRNA binding proteins, this protein initially binds near the 5'-end of the 23S rRNA. It is important during the early stages of 50S assembly. It makes multiple contacts with different domains of the 23S rRNA in the assembled 50S subunit and ribosome. In terms of biological role, forms part of the polypeptide exit tunnel. In Ralstonia pickettii (strain 12J), this protein is Large ribosomal subunit protein uL4.